The sequence spans 93 residues: Large ribosomal subunit protein eL42 (93 aa).

Residues Cys11, Cys14, Cys72, and Cys75 each contribute to the Zn(2+) site. Residues 11–75 (CPHCHSHFEH…TDLKYRCSEC (65 aa)) form a C4-type zinc finger.

This sequence belongs to the eukaryotic ribosomal protein eL42 family. In terms of assembly, part of the 50S ribosomal subunit. Requires Zn(2+) as cofactor.

In terms of biological role, binds to the 23S rRNA. This chain is Large ribosomal subunit protein eL42 (rpl44e), found in Natronomonas pharaonis (strain ATCC 35678 / DSM 2160 / CIP 103997 / JCM 8858 / NBRC 14720 / NCIMB 2260 / Gabara) (Halobacterium pharaonis).